Consider the following 254-residue polypeptide: tRNA pseudouridine synthase A (254 aa).

The active-site Nucleophile is the Asp-52. Tyr-111 is a substrate binding site.

Belongs to the tRNA pseudouridine synthase TruA family. Homodimer.

The catalysed reaction is uridine(38/39/40) in tRNA = pseudouridine(38/39/40) in tRNA. In terms of biological role, formation of pseudouridine at positions 38, 39 and 40 in the anticodon stem and loop of transfer RNAs. The polypeptide is tRNA pseudouridine synthase A (Methylobacterium nodulans (strain LMG 21967 / CNCM I-2342 / ORS 2060)).